Here is a 794-residue protein sequence, read N- to C-terminus: Potassium transporter 2 (794 aa).

The Cytoplasmic segment spans residues 1 to 21 (MDLNLGKCCGSRSSKKESWRS). A helical transmembrane segment spans residues 22–42 (VLLLAYQSLGVVYGDLSISPL). The Extracellular portion of the chain corresponds to 43–64 (YVFKSTFAEDIQHSETNEEIYG). A helical transmembrane segment spans residues 65 to 85 (VMSFVFWTLTLVPLLKYVFIV). The Cytoplasmic segment spans residues 86–153 (LRADDNGEGG…EKHKWLHTAL (68 aa)). The helical transmembrane segment at 154-174 (LLLVLLGTCMVIGDGLLTPAI) threads the bilayer. At 175-193 (SVFSAVSGLELNMSKEHHQ) the chain is on the extracellular side. Residues 194–214 (YAVIPITCFILVCLFSLQHFG) traverse the membrane as a helical segment. At 215–217 (THR) the chain is on the cytoplasmic side. Residues 218–238 (VGFVFAPIVLTWLLCISGIGL) form a helical membrane-spanning segment. Residues 239-265 (YNIIQWNPHIYKALSPTYMFMFLRKTR) lie on the Extracellular side of the membrane. Residues 266-286 (VSGWMSLGGILLCITGAEAMF) traverse the membrane as a helical segment. The Cytoplasmic segment spans residues 287–294 (ADLGHFNY). The helical transmembrane segment at 295 to 315 (AAIQIAFTFLVYPALILAYMG) threads the bilayer. Residues 316 to 339 (QAAYLSRHHHSAHAIGFYVSVPKC) lie on the Extracellular side of the membrane. Residues 340-360 (LHWPVLAVAILASVVGSQAII) traverse the membrane as a helical segment. The Cytoplasmic portion of the chain corresponds to 361–391 (SGTFSIINQSQSLGCFPRVKVIHTSDKMHGQ). A helical membrane pass occupies residues 392–412 (IYIPEINWMLMILCIAVTIGF). Residues 413–417 (RDVKH) lie on the Extracellular side of the membrane. 2 consecutive transmembrane segments (helical) span residues 418-438 (LGNASGLAVMAVMLVTTCLTS) and 439-459 (LVIVLCWHKPPILALAFLLFF). The Extracellular segment spans residues 460-476 (GSIELLYFSASLTKFRE). The helical transmembrane segment at 477–497 (GAWLPILLSLIFMIIMFVWHY) threads the bilayer. The Cytoplasmic portion of the chain corresponds to 498–794 (TTIKKYEFDL…LLEVGMVYVV (297 aa)).

The protein belongs to the HAK/KUP transporter (TC 2.A.72.3) family. In terms of tissue distribution, slightly detected in roots, stems, leaves and flowers of mature plants and in potassium-starved plants.

It localises to the cell membrane. In terms of biological role, low-affinity potassium transporter. Could mediate the potassium-dependent cell expansion in growing tissues. This Arabidopsis thaliana (Mouse-ear cress) protein is Potassium transporter 2 (POT2).